A 383-amino-acid polypeptide reads, in one-letter code: Chorismate synthase (383 aa).

NADP(+) is bound by residues Arg39 and Arg45. FMN is bound by residues 128-130 (RAS), Gly291, 306-310 (KPIAT), and Arg332.

It belongs to the chorismate synthase family. As to quaternary structure, homotetramer. It depends on FMNH2 as a cofactor.

It catalyses the reaction 5-O-(1-carboxyvinyl)-3-phosphoshikimate = chorismate + phosphate. It functions in the pathway metabolic intermediate biosynthesis; chorismate biosynthesis; chorismate from D-erythrose 4-phosphate and phosphoenolpyruvate: step 7/7. Its function is as follows. Catalyzes the anti-1,4-elimination of the C-3 phosphate and the C-6 proR hydrogen from 5-enolpyruvylshikimate-3-phosphate (EPSP) to yield chorismate, which is the branch point compound that serves as the starting substrate for the three terminal pathways of aromatic amino acid biosynthesis. This reaction introduces a second double bond into the aromatic ring system. The protein is Chorismate synthase of Thermus thermophilus (strain ATCC 27634 / DSM 579 / HB8).